The sequence spans 96 residues: Co-chaperonin GroES (96 aa).

The protein belongs to the GroES chaperonin family. Heptamer of 7 subunits arranged in a ring. Interacts with the chaperonin GroEL.

It is found in the cytoplasm. In terms of biological role, together with the chaperonin GroEL, plays an essential role in assisting protein folding. The GroEL-GroES system forms a nano-cage that allows encapsulation of the non-native substrate proteins and provides a physical environment optimized to promote and accelerate protein folding. GroES binds to the apical surface of the GroEL ring, thereby capping the opening of the GroEL channel. The protein is Co-chaperonin GroES of Methylorubrum populi (strain ATCC BAA-705 / NCIMB 13946 / BJ001) (Methylobacterium populi).